We begin with the raw amino-acid sequence, 485 residues long: Protein LAZ1 (485 aa).

Topologically, residues 1 to 19 (MDILKSYHLLAAAYSAPAW) are cytoplasmic. The chain crosses the membrane as a helical span at residues 20–40 (ASFMAGAFLVLTLSLSLFLVF). The Lumenal segment spans residues 41–53 (DHLSTYKNPEEQK). Residues 54–74 (FLIGVILMVPCYSIESFASLV) form a helical membrane-spanning segment. The Cytoplasmic segment spans residues 75–167 (KPSISVDCGI…QVVKFGIVQY (93 aa)). The chain crosses the membrane as a helical span at residues 168–188 (MIIKSLTALTALILEAFGVYC). The Lumenal portion of the chain corresponds to 189-196 (EGEFKWGC). The chain crosses the membrane as a helical span at residues 197–217 (GYPYLAVVLNFSQSWALYCLV). Residues 218 to 241 (QFYGATKDELAHIQPLAKFLTFKS) lie on the Cytoplasmic side of the membrane. A helical membrane pass occupies residues 242–262 (IVFLTWWQGVAIALLSSLGLF). Topologically, residues 263–277 (KSSIAQSLQLKTSVQ) are lumenal. Residues 278–298 (DFIICIEMGIASVVHLYVFPA) form a helical membrane-spanning segment. Residues 299–485 (KPYGLMGDRF…VRGRRWITKD (187 aa)) lie on the Cytoplasmic side of the membrane. Positions 384 to 415 (MEKSITKFNEKLHKISQNIKKHDKEKRRVKDD) form a coiled coil. Residues 400 to 485 (QNIKKHDKEK…VRGRRWITKD (86 aa)) form a disordered region. Residues 403 to 416 (KKHDKEKRRVKDDS) are compositionally biased toward basic and acidic residues. Over residues 455–469 (GYTSAESGGESSSDQ) the composition is skewed to polar residues. The segment covering 476 to 485 (VRGRRWITKD) has biased composition (basic and acidic residues).

The protein belongs to the TMEM184 family.

Its subcellular location is the endomembrane system. It localises to the cell membrane. The protein localises to the cytoplasm. It is found in the cytosol. Functionally, required for programmed cell death (PCD) associated with hypersensitive response (HR). Involved both in the induction of EDS1/PAD4 mediated HR and in accelerated cell death in the acd11 mutant. Not required for HR induction elicited through pathways exclusively dependent on CC-NB-LRR resistance proteins. This Arabidopsis thaliana (Mouse-ear cress) protein is Protein LAZ1.